A 430-amino-acid polypeptide reads, in one-letter code: Adenylosuccinate synthetase (430 aa).

GTP is bound by residues 13–19 (GDEGKGK) and 41–43 (GHT). Asp14 (proton acceptor) is an active-site residue. 2 residues coordinate Mg(2+): Asp14 and Gly41. IMP contacts are provided by residues 14–17 (DEGK), 39–42 (NAGH), Thr130, Arg144, Gln225, Thr240, and Arg304. Catalysis depends on His42, which acts as the Proton donor. Position 300–306 (300–306 (STTGRAR)) interacts with substrate. GTP-binding positions include Arg306, 332 to 334 (KLD), and 414 to 416 (STG).

Belongs to the adenylosuccinate synthetase family. In terms of assembly, homodimer. Requires Mg(2+) as cofactor.

Its subcellular location is the cytoplasm. The catalysed reaction is IMP + L-aspartate + GTP = N(6)-(1,2-dicarboxyethyl)-AMP + GDP + phosphate + 2 H(+). It functions in the pathway purine metabolism; AMP biosynthesis via de novo pathway; AMP from IMP: step 1/2. Functionally, plays an important role in the de novo pathway of purine nucleotide biosynthesis. Catalyzes the first committed step in the biosynthesis of AMP from IMP. This chain is Adenylosuccinate synthetase, found in Alcanivorax borkumensis (strain ATCC 700651 / DSM 11573 / NCIMB 13689 / SK2).